Here is a 375-residue protein sequence, read N- to C-terminus: OVARIAN TUMOR DOMAIN-containing deubiquitinating enzyme 7 (375 aa).

Residues 1–18 (MAKTKQQKSKPKKQPHQK) show a composition bias toward basic residues. The segment at 1–23 (MAKTKQQKSKPKKQPHQKQGKDC) is disordered. The region spanning 37-161 (LKIIQVTADG…GEHYNSVRSK (125 aa)) is the OTU domain. The active site involves aspartate 45. The active-site Nucleophile is cysteine 48. Histidine 154 is a catalytic residue. In terms of domain architecture, UBA-like spans 202–250 (HVNAGAIKVVMSGSCCDNTEKAEQVLLQVNGDVDAAIEFLIADQGMESL). Composition is skewed to polar residues over residues 251–264 (TEND…SDTI) and 290–305 (ASGN…CTTQ). The disordered stretch occupies residues 251–306 (TENDTETASASDTINPKHASDSPMENTEQAREELIEEESASGNNSETVQAKCTTQT). The Nuclear localization signal motif lies at 308–315 (DKKIPRNK).

It belongs to the peptidase C85 family.

It localises to the nucleus. The catalysed reaction is Thiol-dependent hydrolysis of ester, thioester, amide, peptide and isopeptide bonds formed by the C-terminal Gly of ubiquitin (a 76-residue protein attached to proteins as an intracellular targeting signal).. Functionally, hydrolase that can remove conjugated ubiquitin from proteins in vitro and may therefore play an important regulatory role at the level of protein turnover by preventing degradation. Cysteine protease with a preference for 'Lys-63' over 'Lys-48' over 'Met-1' -linked ubiquitin (UB) tetramers as substrates. Also cleaves RUB-GST fusion. In Arabidopsis thaliana (Mouse-ear cress), this protein is OVARIAN TUMOR DOMAIN-containing deubiquitinating enzyme 7.